A 509-amino-acid polypeptide reads, in one-letter code: Solute carrier family 2, facilitated glucose transporter member 4 (509 aa).

The Cytoplasmic portion of the chain corresponds to 1-23 (MPSGFQQIGSDDGEPPRQRVTGT). Residues 7 to 13 (QIGSDDG) form an interaction with SRFBP1 region. Ser10 carries the phosphoserine modification. A helical transmembrane segment spans residues 24–44 (LVLAVFSAVLGSLQFGYNIGV). At 45–80 (INAPQKVIEQSYNATWLGRQGPGGPDSIPQGTLTTL) the chain is on the extracellular side. A glycan (N-linked (GlcNAc...) asparagine) is linked at Asn57. Residues 81–101 (WALSVAIFSVGGMISSFLIGI) form a helical membrane-spanning segment. The Cytoplasmic segment spans residues 102 to 110 (ISQWLGRKR). A helical membrane pass occupies residues 111–131 (AMLANNVLAVLGGALMGLANA). At 132–141 (AASYEILILG) the chain is on the extracellular side. The chain crosses the membrane as a helical span at residues 142–162 (RFLIGAYSGLTSGLVPMYVGE). At 163–170 (IAPTHLRG) the chain is on the cytoplasmic side. The chain crosses the membrane as a helical span at residues 171–191 (ALGTLNQLAIVIGILVAQVLG). A D-glucose-binding site is contributed by Gln177. Topologically, residues 192–200 (LESMLGTAT) are extracellular. The chain crosses the membrane as a helical span at residues 201 to 221 (LWPLLLALTVLPALLQLILLP). The Cytoplasmic portion of the chain corresponds to 222-286 (FCPESPRYLY…QLLGSRTHRQ (65 aa)). The S-palmitoyl cysteine moiety is linked to residue Cys223. The residue at position 274 (Ser274) is a Phosphoserine; by SGK1. Residues 287–307 (PLIIAVVLQLSQQLSGINAVF) traverse the membrane as a helical segment. D-glucose is bound by residues 298-299 (QQ) and Asn304. Topologically, residues 308-322 (YYSTSIFESAGVGQP) are extracellular. The helical transmembrane segment at 323–343 (AYATIGAGVVNTVFTLVSVLL) threads the bilayer. Asn333 contributes to the D-glucose binding site. Topologically, residues 344 to 352 (VERAGRRTL) are cytoplasmic. The chain crosses the membrane as a helical span at residues 353–373 (HLLGLAGMCGCAILMTVALLL). Residues 374–384 (LERVPAMSYVS) lie on the Extracellular side of the membrane. A helical membrane pass occupies residues 385–405 (IVAIFGFVAFFEIGPGPIPWF). Residues Glu396 and Trp404 each coordinate D-glucose. Topologically, residues 406–416 (IVAELFSQGPR) are cytoplasmic. A helical membrane pass occupies residues 417–437 (PAAMAVAGFSNWTCNFIVGMG). Residues 438-444 (FQYVADA) are Extracellular-facing. A helical membrane pass occupies residues 445–465 (MGPYVFLLFAVLLLGFFIFTF). The Cytoplasmic segment spans residues 466 to 508 (LKVPETRGRTFDQISAAFRRTPSLLEQEVKPSTELEYLGPDEN). Thr486 carries the post-translational modification Phosphothreonine. Phosphoserine is present on Ser488. Residues 489 to 490 (LL) carry the Dileucine internalization motif motif.

Belongs to the major facilitator superfamily. Sugar transporter (TC 2.A.1.1) family. Glucose transporter subfamily. In terms of assembly, binds to DAXX. Interacts via its N-terminus with SRFBP1. Interacts with NDUFA9. Interacts with TRARG1; the interaction is required for proper SLC2A4 recycling after insulin stimulation. Post-translationally, sumoylated. Palmitoylated. Palmitoylation by ZDHHC7 controls the insulin-dependent translocation of GLUT4 to the plasma membrane. Expressed in skeletal and cardiac muscles. Expressed in brown and white adipose tissues.

It is found in the cell membrane. It localises to the endomembrane system. Its subcellular location is the cytoplasm. The protein localises to the perinuclear region. It catalyses the reaction D-glucose(out) = D-glucose(in). In terms of biological role, insulin-regulated facilitative glucose transporter, which plays a key role in removal of glucose from circulation. Response to insulin is regulated by its intracellular localization: in the absence of insulin, it is efficiently retained intracellularly within storage compartments in muscle and fat cells. Upon insulin stimulation, translocates from these compartments to the cell surface where it transports glucose from the extracellular milieu into the cell. The polypeptide is Solute carrier family 2, facilitated glucose transporter member 4 (Mus musculus (Mouse)).